We begin with the raw amino-acid sequence, 476 residues long: RNA-binding protein 45 (476 aa).

A disordered region spans residues 1–20; it reads MDEAGSSASGGGFRPGVDSL. 2 consecutive RRM domains span residues 26–106 and 121–195; these read SRIF…IAQS and TRIF…PKNK. Residue Lys-34 forms a Glycyl lysine isopeptide (Lys-Gly) (interchain with G-Cter in SUMO2) linkage. Residues Ser-199 and Ser-464 each carry the phosphoserine modification. The region spanning 392–464 is the RRM 3 domain; sequence ERLFIVFNPH…VRLKVMLADS (73 aa).

Its subcellular location is the cytoplasm. The protein localises to the nucleus. Functionally, RNA-binding protein with binding specificity for poly(C). May play an important role in neural development. This Homo sapiens (Human) protein is RNA-binding protein 45 (RBM45).